We begin with the raw amino-acid sequence, 2201 residues long: RNA-directed RNA polymerase L (2201 aa).

An endonuclease region spans residues 26–285 (KNIMLAQTQI…VCSKSVEYTF (260 aa)). Mn(2+)-binding residues include Glu51, Asp88, and Glu101. Residue Lys114 is part of the active site. A RdRp catalytic domain is found at 1156–1352 (LDMKSVVRQS…FLSDRLNKFV (197 aa)). Mg(2+) is bound at residue Asp1312.

This sequence belongs to the Bunyavirales RNA polymerase family. As to quaternary structure, homomultimer; the oligomeric structure is essential for the polymerase activity. Interacts with nucleoprotein N. Interacts with protein Z; this interaction inhibits viral transcription and replication, Z partially blocks the product exit tunnel for the releasing nascent RNA product. Mn(2+) serves as cofactor. It depends on Mg(2+) as a cofactor.

The protein localises to the virion. It localises to the host cytoplasm. It catalyses the reaction RNA(n) + a ribonucleoside 5'-triphosphate = RNA(n+1) + diphosphate. RNA-dependent RNA polymerase, which is responsible for the replication and transcription of the viral RNA genome using antigenomic RNA as an intermediate. During transcription, synthesizes subgenomic RNAs and assures their capping by a cap-snatching mechanism, which involves the endonuclease activity cleaving the host capped pre-mRNAs. These short capped RNAs are then used as primers for viral transcription. The 3'-end of subgenomic mRNAs molecules are heterogeneous and not polyadenylated. The replicase function is to direct synthesis of antigenomic and genomic RNA which are encapsidated and non capped. As a consequence of the use of the same enzyme for both transcription and replication, these mechanisms need to be well coordinated. These processes may be regulated by proteins N and Z in a dose-dependent manner. Z protein inhibits the viral polymerase L und thus the viral transcription and RNA synthesis. The polypeptide is RNA-directed RNA polymerase L (Oecomys bicolor (Bicolored arboreal rice rat)).